We begin with the raw amino-acid sequence, 767 residues long: Protein SQS1 (767 aa).

The segment covering 1-34 (MAKRHKHFEGRGRGGSRGRGRGRGGSRGRGRGGS) has biased composition (basic residues). Disordered regions lie at residues 1–71 (MAKR…FNFA), 101–127 (SMKM…ARPV), 147–258 (RSKN…STVK), 363–387 (KNSS…DPEF), and 466–494 (EEPP…EIGD). Positions 35-45 (RSRGAGRGGFG) are enriched in gly residues. A compositionally biased stretch (acidic residues) spans 173 to 239 (ESGTEEEIEE…LFFIDEEGYN (67 aa)). A compositionally biased stretch (polar residues) spans 245 to 254 (TVPSVSISED). A compositionally biased stretch (acidic residues) spans 481–493 (TSEEESDNDSEIG). Residues 589-652 (GLHVLNIKEE…QTHIFVQKVK (64 aa)) enclose the R3H domain. In terms of domain architecture, G-patch spans 716-763 (RNNIGRILLERLGWSEGEGLGIQGNKGISEPVFAVVKKSKTGLRHERK).

This sequence belongs to the SQS1 family.

The protein localises to the cytoplasm. It localises to the nucleus. May be involved in splicing. The polypeptide is Protein SQS1 (SQS1) (Vanderwaltozyma polyspora (strain ATCC 22028 / DSM 70294 / BCRC 21397 / CBS 2163 / NBRC 10782 / NRRL Y-8283 / UCD 57-17) (Kluyveromyces polysporus)).